The chain runs to 256 residues: Small ribosomal subunit protein uS2 (256 aa).

It belongs to the universal ribosomal protein uS2 family.

The chain is Small ribosomal subunit protein uS2 from Brucella abortus (strain S19).